Here is a 455-residue protein sequence, read N- to C-terminus: Succinyl-CoA--L-malate CoA-transferase alpha subunit (455 aa).

The segment at 1-58 is disordered; the sequence is MAKASRLTRSTGQPTEVSEGQVTGTSEMPPTGEEPSGHAESKPPASDPMSTPGTGQEQ. Composition is skewed to polar residues over residues 7–28 and 48–58; these read LTRSTGQPTEVSEGQVTGTSEM and PMSTPGTGQEQ. The active-site Nucleophile is Asp227.

Belongs to the CoA-transferase III family. In terms of assembly, forms a large complex composed of six heterodimers (alpha, beta).

The enzyme catalyses succinyl-CoA + (S)-malate = (S)-malyl-CoA + succinate. It catalyses the reaction (3S)-citramalate + succinyl-CoA = (3S)-citramalyl-CoA + succinate. Functionally, involved in the 3-hydroxypropionate cycle used for autotrophic carbon dioxide fixation. Catalyzes the transfer of CoA moiety from succinyl-CoA to L-malate to yield L-malyl-CoA. In Chloroflexus aurantiacus (strain ATCC 29366 / DSM 635 / J-10-fl), this protein is Succinyl-CoA--L-malate CoA-transferase alpha subunit (smtA).